A 154-amino-acid polypeptide reads, in one-letter code: Large ribosomal subunit protein uL30 (154 aa).

This sequence belongs to the universal ribosomal protein uL30 family. Part of the 50S ribosomal subunit.

The polypeptide is Large ribosomal subunit protein uL30 (Methanococcus maripaludis (strain C5 / ATCC BAA-1333)).